The following is a 596-amino-acid chain: Elongation factor 4 (596 aa).

A tr-type G domain is found at 2–183 (ENIRNFCIIA…AIIQRIPPPK (182 aa)). Residues 14-19 (DHGKST) and 130-133 (NKID) each bind GTP.

The protein belongs to the TRAFAC class translation factor GTPase superfamily. Classic translation factor GTPase family. LepA subfamily.

It is found in the cell inner membrane. It catalyses the reaction GTP + H2O = GDP + phosphate + H(+). Functionally, required for accurate and efficient protein synthesis under certain stress conditions. May act as a fidelity factor of the translation reaction, by catalyzing a one-codon backward translocation of tRNAs on improperly translocated ribosomes. Back-translocation proceeds from a post-translocation (POST) complex to a pre-translocation (PRE) complex, thus giving elongation factor G a second chance to translocate the tRNAs correctly. Binds to ribosomes in a GTP-dependent manner. This is Elongation factor 4 from Cytophaga hutchinsonii (strain ATCC 33406 / DSM 1761 / CIP 103989 / NBRC 15051 / NCIMB 9469 / D465).